Reading from the N-terminus, the 245-residue chain is 5-oxoprolinase subunit A (245 aa).

The protein belongs to the LamB/PxpA family. As to quaternary structure, forms a complex composed of PxpA, PxpB and PxpC.

It catalyses the reaction 5-oxo-L-proline + ATP + 2 H2O = L-glutamate + ADP + phosphate + H(+). Catalyzes the cleavage of 5-oxoproline to form L-glutamate coupled to the hydrolysis of ATP to ADP and inorganic phosphate. This is 5-oxoprolinase subunit A from Erwinia tasmaniensis (strain DSM 17950 / CFBP 7177 / CIP 109463 / NCPPB 4357 / Et1/99).